Consider the following 141-residue polypeptide: Sperm protein associated with the nucleus on the X chromosome N3 (141 aa).

Over residues 1-10 (MEQPTSSTNG) the composition is skewed to polar residues. Disordered regions lie at residues 1-47 (MEQP…TKTS) and 66-141 (NQLE…SGED). Positions 11 to 26 (EKTKSPCESNNKKNDE) are enriched in basic and acidic residues. Residues 66-80 (NQLENEQSQENSINP) show a composition bias toward polar residues. Residues 84-103 (EEDEGVDLSEGSSNEDEDLG) are compositionally biased toward acidic residues. Positions 132–141 (EGSSQDSGED) are enriched in polar residues.

Belongs to the SPAN-X family.

The polypeptide is Sperm protein associated with the nucleus on the X chromosome N3 (SPANXN3) (Homo sapiens (Human)).